We begin with the raw amino-acid sequence, 89 residues long: Small ribosomal subunit protein uS15 (89 aa).

This sequence belongs to the universal ribosomal protein uS15 family. As to quaternary structure, part of the 30S ribosomal subunit. Forms a bridge to the 50S subunit in the 70S ribosome, contacting the 23S rRNA.

One of the primary rRNA binding proteins, it binds directly to 16S rRNA where it helps nucleate assembly of the platform of the 30S subunit by binding and bridging several RNA helices of the 16S rRNA. Its function is as follows. Forms an intersubunit bridge (bridge B4) with the 23S rRNA of the 50S subunit in the ribosome. This is Small ribosomal subunit protein uS15 from Yersinia enterocolitica serotype O:8 / biotype 1B (strain NCTC 13174 / 8081).